Here is a 277-residue protein sequence, read N- to C-terminus: Alpha carbonic anhydrase 3 (277 aa).

The first 19 residues, methionine 1–alanine 19, serve as a signal peptide directing secretion. The region spanning threonine 24–glutamate 259 is the Alpha-carbonic anhydrase domain. An intrachain disulfide couples cysteine 49 to cysteine 209. N-linked (GlcNAc...) asparagine glycans are attached at residues asparagine 70 and asparagine 107. Positions 117, 119, and 136 each coordinate Zn(2+). Substrate is bound at residue threonine 205–threonine 206. The disordered stretch occupies residues leucine 257–valine 277.

Belongs to the alpha-class carbonic anhydrase family. The cofactor is Zn(2+). Post-translationally, N-glycosylated. Expressed in flowers and siliques.

The protein resides in the plastid. It localises to the chloroplast stroma. The catalysed reaction is hydrogencarbonate + H(+) = CO2 + H2O. Reversible hydration of carbon dioxide. In Arabidopsis thaliana (Mouse-ear cress), this protein is Alpha carbonic anhydrase 3 (ACA3).